The chain runs to 210 residues: Glutathione S-transferase P (210 aa).

The region spanning 2 to 81 is the GST N-terminal domain; it reads ASYTIVYFPV…HLGRTLGLYG (80 aa). Y4 carries the post-translational modification Phosphotyrosine; by EGFR. Glutathione contacts are provided by residues Y8, R14, W39, K45, and 52–53; that span reads QL. T62 carries the post-translational modification Phosphothreonine. 65–66 provides a ligand contact to glutathione; the sequence is QS. Positions 83-204 constitute a GST C-terminal domain; the sequence is DQREAALVDM…ASPEHVNRPI (122 aa). K103 and K116 each carry N6-succinyllysine. An N6-acetyllysine modification is found at K128.

This sequence belongs to the GST superfamily. Pi family. Homodimer. Interacts with CDK5.

It localises to the cytoplasm. The protein resides in the mitochondrion. It is found in the nucleus. The catalysed reaction is RX + glutathione = an S-substituted glutathione + a halide anion + H(+). It catalyses the reaction prostaglandin J2 + glutathione = prostaglandin J2-S-(R)-glutathione. It carries out the reaction prostaglandin J2 + glutathione = prostaglandin J2-S-(S)-glutathione. The enzyme catalyses prostaglandin A2 + glutathione = prostaglandin A2-S-(S)-glutathione. The catalysed reaction is 11(S)-hydroxy-14(S),15(S)-epoxy-(5Z,8Z,12E)-eicosatrienoate + glutathione = (11S,15S)-dihydroxy-14(R)-S-glutathionyl-(5Z,8Z,12E)-eicosatrienoate. Functionally, conjugation of reduced glutathione to a wide number of exogenous and endogenous hydrophobic electrophiles. Involved in the formation of glutathione conjugates of both prostaglandin A2 (PGA2) and prostaglandin J2 (PGJ2). Participates in the formation of novel hepoxilin regioisomers. Negatively regulates CDK5 activity via p25/p35 translocation to prevent neurodegeneration. In Capra hircus (Goat), this protein is Glutathione S-transferase P (GSTP1).